The sequence spans 187 residues: Threonylcarbamoyl-AMP synthase (187 aa).

In terms of domain architecture, YrdC-like spans 4–187 (TLDLDRAVAA…DARSGQILRD (184 aa)).

It belongs to the SUA5 family. TsaC subfamily.

Its subcellular location is the cytoplasm. It catalyses the reaction L-threonine + hydrogencarbonate + ATP = L-threonylcarbamoyladenylate + diphosphate + H2O. Required for the formation of a threonylcarbamoyl group on adenosine at position 37 (t(6)A37) in tRNAs that read codons beginning with adenine. Catalyzes the conversion of L-threonine, HCO(3)(-)/CO(2) and ATP to give threonylcarbamoyl-AMP (TC-AMP) as the acyladenylate intermediate, with the release of diphosphate. This is Threonylcarbamoyl-AMP synthase from Xanthomonas axonopodis pv. citri (strain 306).